A 354-amino-acid polypeptide reads, in one-letter code: Polyprenal reductase 1 (354 aa).

6 helical membrane-spanning segments follow: residues 11–31, 78–98, 141–158, 176–196, 235–255, and 301–321; these read PLLC…ALPI, FMHF…AIWF, YHVW…IQVL, MHIV…LSLA, PLLK…WGSL, and GMLV…VFVI.

This sequence belongs to the steroid 5-alpha reductase family. Polyprenal reductase subfamily.

The protein localises to the cell membrane. The enzyme catalyses a di-trans,poly-cis-dolichal + NADP(+) = a di-trans,poly-cis-polyprenal + NADPH + H(+). The protein operates within protein modification; protein glycosylation. Functionally, plays a key role in early steps of protein N-linked glycosylation by being involved in the conversion of polyprenol into dolichol. Acts as a polyprenal reductase that mediates the reduction of polyprenal into dolichal in a NADP-dependent mechanism. Dolichols are required for the synthesis of dolichol-linked monosaccharides and the oligosaccharide precursor used for N-glycosylation. This chain is Polyprenal reductase 1, found in Oryza sativa subsp. indica (Rice).